Here is a 722-residue protein sequence, read N- to C-terminus: G2-specific protein kinase fin1 (722 aa).

Positions 4 to 281 (YKILECIGHG…TYQLLRSPIL (278 aa)) constitute a Protein kinase domain. ATP-binding positions include 10–18 (IGHGSFGRI) and K33. The Proton acceptor role is filled by D151. A disordered region spans residues 528-557 (LSVESDETAVSASSGESVPTDSTLTDTKSK). Residues 535-546 (TAVSASSGESVP) show a composition bias toward polar residues.

This sequence belongs to the protein kinase superfamily. Ser/Thr protein kinase family. NIMA subfamily.

Its subcellular location is the cytoplasm. The protein resides in the cytoskeleton. It is found in the microtubule organizing center. The protein localises to the spindle pole body. It catalyses the reaction L-seryl-[protein] + ATP = O-phospho-L-seryl-[protein] + ADP + H(+). The enzyme catalyses L-threonyl-[protein] + ATP = O-phospho-L-threonyl-[protein] + ADP + H(+). Functionally, promotes chromosome condensation and nuclear envelope dynamics during mitosis. Activity appears at metaphase-anaphase transition. In Schizosaccharomyces pombe (strain 972 / ATCC 24843) (Fission yeast), this protein is G2-specific protein kinase fin1 (fin1).